A 230-amino-acid polypeptide reads, in one-letter code: Protein UPS2, mitochondrial (230 aa).

The region spanning 1–175 is the PRELI/MSF1 domain; it reads MKLFQNSYDF…VLQVFSENWE (175 aa).

The protein belongs to the slowmo family. In terms of assembly, interacts with MDM35.

The protein resides in the mitochondrion inner membrane. Its subcellular location is the mitochondrion intermembrane space. Its function is as follows. Required for mitochondrial cristae morphogenesis and MGM1-processing. Controls the stability of mitochondrial phosphatidylethanolamine (PE). With UPS1, controls the level of cardiolipin in mitochondria. Cardiolipin is a unique phospholipid with four fatty acid chains and is present mainly in the mitochondrial inner membrane where it stabilizes the electron transport chain supercomplex between complexes III and IV through direct interaction of their subunits. This is Protein UPS2, mitochondrial (UPS2) from Saccharomyces cerevisiae (strain ATCC 204508 / S288c) (Baker's yeast).